The sequence spans 161 residues: MLSSSPTSFTHPFLSSSPPLSPISPPSRTARISPPLVSASCSYTYTEDSPRLHQIPRRLTTVPASLYDVLEVPLGATSQDIKSAYRRLARICHPDVAGTDRTSSSSADEFMKIHAAYCTLSDPEKRSVYDRRMLRRSRPLTVGTSGLGSYVGRNWETDQCW.

Low complexity predominate over residues 1-18 (MLSSSPTSFTHPFLSSSP). The tract at residues 1–31 (MLSSSPTSFTHPFLSSSPPLSPISPPSRTAR) is disordered. A chloroplast-targeting transit peptide spans 1-36 (MLSSSPTSFTHPFLSSSPPLSPISPPSRTARISPPL). The region spanning 65–133 (SLYDVLEVPL…EKRSVYDRRM (69 aa)) is the J domain.

The protein belongs to the DnaJ family. C/III subfamily. In terms of tissue distribution, expressed in roots, stems, leaves, flowers and developing siliques.

Its subcellular location is the plastid. It localises to the chloroplast stroma. Functionally, plays a continuous role in plant development probably in the structural organization of compartments. This Arabidopsis thaliana (Mouse-ear cress) protein is Chaperone protein dnaJ 11, chloroplastic (ATJ11).